The following is a 91-amino-acid chain: Signal peptidase complex subunit 1 (91 aa).

The Cytoplasmic portion of the chain corresponds to 1 to 28; it reads MEIFNDLSRKLVFPIDYPSQRRVAKLTD. The helical transmembrane segment at 29–48 threads the bilayer; sequence IILGSGTLVSCLLGFYAGSL. Residues 49 to 51 are Lumenal-facing; the sequence is SLT. A helical transmembrane segment spans residues 52-71; it reads LYAFAAAYGLALLLVVPAYG. The Cytoplasmic segment spans residues 72 to 91; the sequence is KYRQQKLAWVGSAAATTKDL.

It belongs to the SPCS1 family. In terms of assembly, component of the signal peptidase complex (SPC) composed of a catalytic subunit SEC11 and three accessory subunits SPC1, SPC2 and SPC3. The complex induces a local thinning of the ER membrane which is used to measure the length of the signal peptide (SP) h-region of protein substrates. This ensures the selectivity of the complex towards h-regions shorter than 18-20 amino acids. SPC associates with the translocon complex.

It localises to the endoplasmic reticulum membrane. Component of the signal peptidase complex (SPC) which catalyzes the cleavage of N-terminal signal sequences from nascent proteins as they are translocated into the lumen of the endoplasmic reticulum. Dispensable for SPC enzymatic activity. The chain is Signal peptidase complex subunit 1 (SPC1) from Eremothecium gossypii (strain ATCC 10895 / CBS 109.51 / FGSC 9923 / NRRL Y-1056) (Yeast).